A 178-amino-acid polypeptide reads, in one-letter code: Ribosomal RNA small subunit methyltransferase G (178 aa).

Residues Gly-54, Leu-59, 105-106 (LE), and Arg-120 each bind S-adenosyl-L-methionine.

Belongs to the methyltransferase superfamily. RNA methyltransferase RsmG family.

It is found in the cytoplasm. It carries out the reaction guanosine(527) in 16S rRNA + S-adenosyl-L-methionine = N(7)-methylguanosine(527) in 16S rRNA + S-adenosyl-L-homocysteine. Its function is as follows. Specifically methylates the N7 position of guanine in position 527 of 16S rRNA. This is Ribosomal RNA small subunit methyltransferase G from Helicobacter pylori (strain ATCC 700392 / 26695) (Campylobacter pylori).